The chain runs to 446 residues: Adenylosuccinate synthetase 1 (446 aa).

Residues 20–26 (GDEGKGK) and 48–50 (GHT) contribute to the GTP site. The Proton acceptor role is filled by Asp-21. The Mg(2+) site is built by Asp-21 and Gly-48. IMP contacts are provided by residues 21 to 24 (DEGK), 46 to 49 (NAGH), Thr-137, Arg-151, Gln-232, Thr-247, and Arg-319. His-49 acts as the Proton donor in catalysis. 315–321 (SVTGRPR) serves as a coordination point for substrate. GTP contacts are provided by residues Arg-321, 347-349 (KLD), and 429-431 (STG).

Belongs to the adenylosuccinate synthetase family. As to quaternary structure, homodimer. The cofactor is Mg(2+).

The protein localises to the cytoplasm. It catalyses the reaction IMP + L-aspartate + GTP = N(6)-(1,2-dicarboxyethyl)-AMP + GDP + phosphate + 2 H(+). Its pathway is purine metabolism; AMP biosynthesis via de novo pathway; AMP from IMP: step 1/2. Plays an important role in the de novo pathway of purine nucleotide biosynthesis. Catalyzes the first committed step in the biosynthesis of AMP from IMP. In Cupriavidus pinatubonensis (strain JMP 134 / LMG 1197) (Cupriavidus necator (strain JMP 134)), this protein is Adenylosuccinate synthetase 1.